The chain runs to 403 residues: Enoyl-[acyl-carrier-protein] reductase [NADH] (403 aa).

NAD(+)-binding positions include 49-54 (GASSGY), 75-76 (FE), 112-113 (DA), and 141-142 (LA). Substrate is bound at residue Tyr227. Tyr237 acts as the Proton donor in catalysis. NAD(+) contacts are provided by residues Lys246 and 276 to 278 (VVT).

The protein belongs to the TER reductase family. In terms of assembly, monomer.

The enzyme catalyses a 2,3-saturated acyl-[ACP] + NAD(+) = a (2E)-enoyl-[ACP] + NADH + H(+). It participates in lipid metabolism; fatty acid biosynthesis. Functionally, involved in the final reduction of the elongation cycle of fatty acid synthesis (FAS II). Catalyzes the reduction of a carbon-carbon double bond in an enoyl moiety that is covalently linked to an acyl carrier protein (ACP). This Pseudomonas putida (strain GB-1) protein is Enoyl-[acyl-carrier-protein] reductase [NADH].